The following is a 679-amino-acid chain: Glutamine-dependent NAD(+) synthetase (679 aa).

One can recognise a CN hydrolase domain in the interval 12-276 (VRVAACTHHT…VRRSVADVDT (265 aa)). The Proton acceptor; for glutaminase activity role is filled by E52. K121 (for glutaminase activity) is an active-site residue. Y127 is a binding site for L-glutamine. Catalysis depends on C176, which acts as the Nucleophile; for glutaminase activity. L-glutamine contacts are provided by S203 and R209. The tract at residues 337-679 (QQDCYEAYNI…DQIDREVPKG (343 aa)) is ligase. An ATP-binding site is contributed by 366 to 373 (GVSGGLDS). Position 456 (N456) interacts with deamido-NAD(+). Position 480 (T480) interacts with ATP. Deamido-NAD(+) is bound by residues E485, 490 to 493 (WSTY), and K635. A disordered region spans residues 639–658 (LPNGPKVSHGGALSPRGDWR).

In the C-terminal section; belongs to the NAD synthetase family.

The catalysed reaction is deamido-NAD(+) + L-glutamine + ATP + H2O = L-glutamate + AMP + diphosphate + NAD(+) + H(+). Its pathway is cofactor biosynthesis; NAD(+) biosynthesis; NAD(+) from deamido-NAD(+) (L-Gln route): step 1/1. Functionally, catalyzes the ATP-dependent amidation of deamido-NAD to form NAD. Uses L-glutamine as a nitrogen source. In Mycobacterium bovis (strain ATCC BAA-935 / AF2122/97), this protein is Glutamine-dependent NAD(+) synthetase.